A 153-amino-acid chain; its full sequence is Actin-related protein 2/3 complex subunit 5-like protein (153 aa).

Ser-64 is modified (phosphoserine).

This sequence belongs to the ARPC5 family. May be a component of the Arp2/3 complex in which it may replace ARPC5.

It localises to the cytoplasm. It is found in the cytoskeleton. The protein localises to the cell projection. Its function is as follows. May function as component of the Arp2/3 complex which is involved in regulation of actin polymerization and together with an activating nucleation-promoting factor (NPF) mediates the formation of branched actin networks. The sequence is that of Actin-related protein 2/3 complex subunit 5-like protein (ARPC5L) from Bos taurus (Bovine).